Reading from the N-terminus, the 617-residue chain is MSGYDRMLRTLGGNLMEFIENLDALHSYLALSYQEMNAPSFRVERGADGKMFLHYYSDRSGLCHIVPGIIEAVAKDFFDIDVIMDILDMNEEVERTGKKEHVVFLIVQKAHRKMRKTKPKRLQDSQGMERDQEALQAAFLKMKEKYLNVSACPVKKSHWDVVRSIVMFGKGHLMNTFEPIYPERLWIEEKTFCNAFPFHIVFDESLQVKQARVNIQKYVPGLQTQNIQLDEYFSIIHPQVTFNIFSIRRFINSQFVLKTRREMMPVAWQSRTTLKLQGQMIWMESMWCMVYLCSPKLRSLQELEELNMHLSDIAPNDTTRDLILLNQQRLAEIELSNQLERKKEELQVLSKHLAIEKKKTETLLYAMLPKHVANQLREGKKVAAGEFKSCTILFSDVVTFTNICTACEPIQIVNVLNSMYSKFDRLTSVHAVYKVETIGDAYMVVGGVPVPIGNHAQRVANFALGMRISAKEVTNPVTGEPIQLRVGIHTGPVLADVVGDKMPRYCLFGDTVNTASRMESHGLPNKVHLSPTAYRALKNQGFKIIERGEIEVKGKGRMTTYFLIQNLNATEDEIMGRSKTPVDHKGSTQKASLPTTKLQGSVQPSCPEHSSLASWLL.

H26 contacts heme. One can recognise a Guanylate cyclase domain in the interval 391–519; it reads TILFSDVVTF…DTVNTASRME (129 aa). A compositionally biased stretch (basic and acidic residues) spans 577–586; the sequence is RSKTPVDHKG. Positions 577–605 are disordered; it reads RSKTPVDHKGSTQKASLPTTKLQGSVQPS. A compositionally biased stretch (polar residues) spans 588–604; that stretch reads TQKASLPTTKLQGSVQP.

This sequence belongs to the adenylyl cyclase class-4/guanylyl cyclase family. In terms of assembly, heterodimer of an alpha and a beta chain. Requires heme as cofactor. As to expression, expressed in gastric signet ring cell carcinoma, but not in the normal stomach.

It is found in the cytoplasm. It carries out the reaction GTP = 3',5'-cyclic GMP + diphosphate. Its activity is regulated as follows. Activated by nitric oxide in the presence of magnesium or manganese ions. This Homo sapiens (Human) protein is Guanylate cyclase soluble subunit beta-2 (GUCY1B2).